The chain runs to 473 residues: 3-isopropylmalate dehydratase large subunit (473 aa).

Positions 353, 414, and 417 each coordinate [4Fe-4S] cluster.

The protein belongs to the aconitase/IPM isomerase family. LeuC type 1 subfamily. In terms of assembly, heterodimer of LeuC and LeuD. It depends on [4Fe-4S] cluster as a cofactor.

It carries out the reaction (2R,3S)-3-isopropylmalate = (2S)-2-isopropylmalate. It participates in amino-acid biosynthesis; L-leucine biosynthesis; L-leucine from 3-methyl-2-oxobutanoate: step 2/4. Its function is as follows. Catalyzes the isomerization between 2-isopropylmalate and 3-isopropylmalate, via the formation of 2-isopropylmaleate. The chain is 3-isopropylmalate dehydratase large subunit from Cellvibrio japonicus (strain Ueda107) (Pseudomonas fluorescens subsp. cellulosa).